The following is a 468-amino-acid chain: Dimethylamine methyltransferase MtbB1 (468 aa).

Pyl356 is a non-standard amino acid (pyrrolysine).

The protein belongs to the dimethylamine methyltransferase family.

The catalysed reaction is Co(I)-[dimethylamine-specific corrinoid protein] + dimethylamine + H(+) = methyl-Co(III)-[dimethylamine-specific corrinoid protein] + methylamine. It functions in the pathway one-carbon metabolism; methanogenesis from dimethylamine. In terms of biological role, catalyzes the transfer of a methyl group from dimethylamine to the corrinoid cofactor of MtbC. This chain is Dimethylamine methyltransferase MtbB1 (mtbB1), found in Methanosarcina mazei (strain ATCC BAA-159 / DSM 3647 / Goe1 / Go1 / JCM 11833 / OCM 88) (Methanosarcina frisia).